The primary structure comprises 618 residues: Glucose starvation modulator protein 1 (618 aa).

The segment at residues 20–48 is a DNA-binding region (zn(2)-C6 fungal-type); sequence CEFCHTKHIQCDVGRPCQNCLKRNIGKFC. The interval 325–353 is disordered; that stretch reads ANANTQPSHNAKLESECDSSSHSDADLEK. Basic and acidic residues predominate over residues 335–353; the sequence is AKLESECDSSSHSDADLEK. A PAS domain is found at 466-538; it reads LLDLENMAKL…QIFNELLAFG (73 aa).

It belongs to the ERT1/acuK family.

Its subcellular location is the nucleus. Its function is as follows. Transcription factor which regulates nonfermentable carbon utilization. Binds specifically to 5'-CGGN(8)CGG-3' and 5'-CGGN(9)CGG-3' sequences in the promoter region. This chain is Glucose starvation modulator protein 1 (GSM1), found in Saccharomyces cerevisiae (strain JAY291) (Baker's yeast).